The primary structure comprises 329 residues: uncharacterized protein (329 aa).

The disordered stretch occupies residues 1–20 (MGESTTQPAGGAAVDDETRS).

This is an uncharacterized protein from Mycobacterium tuberculosis (strain CDC 1551 / Oshkosh).